The chain runs to 34 residues: Photosystem II reaction center protein M (34 aa).

The helical transmembrane segment at 5-25 (ILAFIATALFILIPTAFLLIL) threads the bilayer.

The protein belongs to the PsbM family. PSII is composed of 1 copy each of membrane proteins PsbA, PsbB, PsbC, PsbD, PsbE, PsbF, PsbH, PsbI, PsbJ, PsbK, PsbL, PsbM, PsbT, PsbX, PsbY, PsbZ, Psb30/Ycf12, at least 3 peripheral proteins of the oxygen-evolving complex and a large number of cofactors. It forms dimeric complexes.

The protein resides in the plastid. It is found in the chloroplast thylakoid membrane. Functionally, one of the components of the core complex of photosystem II (PSII). PSII is a light-driven water:plastoquinone oxidoreductase that uses light energy to abstract electrons from H(2)O, generating O(2) and a proton gradient subsequently used for ATP formation. It consists of a core antenna complex that captures photons, and an electron transfer chain that converts photonic excitation into a charge separation. This subunit is found at the monomer-monomer interface. The chain is Photosystem II reaction center protein M from Angiopteris evecta (Mule's foot fern).